A 434-amino-acid polypeptide reads, in one-letter code: Nicotinate phosphoribosyltransferase (434 aa).

At His-242 the chain carries Phosphohistidine; by autocatalysis.

The protein belongs to the NAPRTase family. In terms of processing, transiently phosphorylated on a His residue during the reaction cycle. Phosphorylation strongly increases the affinity for substrates and increases the rate of nicotinate D-ribonucleotide production. Dephosphorylation regenerates the low-affinity form of the enzyme, leading to product release.

The enzyme catalyses nicotinate + 5-phospho-alpha-D-ribose 1-diphosphate + ATP + H2O = nicotinate beta-D-ribonucleotide + ADP + phosphate + diphosphate. The protein operates within cofactor biosynthesis; NAD(+) biosynthesis; nicotinate D-ribonucleotide from nicotinate: step 1/1. Its function is as follows. Catalyzes the synthesis of beta-nicotinate D-ribonucleotide from nicotinate and 5-phospho-D-ribose 1-phosphate at the expense of ATP. This Brucella canis (strain ATCC 23365 / NCTC 10854 / RM-666) protein is Nicotinate phosphoribosyltransferase.